The primary structure comprises 244 residues: 3-oxoacyl-[acyl-carrier-protein] reductase FabG (244 aa).

Residues 12–15 (GASR) and threonine 37 each bind NADP(+). Ca(2+) contacts are provided by glycine 50 and glycine 53. Residues 59–60 (NV) and asparagine 86 contribute to the NADP(+) site. Serine 138 lines the substrate pocket. Asparagine 145 contacts Ca(2+). Tyrosine 151 functions as the Proton acceptor in the catalytic mechanism. NADP(+) contacts are provided by residues 151–155 (YAAAK) and isoleucine 184. The Ca(2+) site is built by glutamate 233 and threonine 234.

It belongs to the short-chain dehydrogenases/reductases (SDR) family. In terms of assembly, homotetramer.

The enzyme catalyses a (3R)-hydroxyacyl-[ACP] + NADP(+) = a 3-oxoacyl-[ACP] + NADPH + H(+). It catalyses the reaction 3-oxobutanoyl-[ACP] + NADPH + H(+) = (3R)-hydroxybutanoyl-[ACP] + NADP(+). The catalysed reaction is 3-oxopentanoyl-[ACP] + NADPH + H(+) = (3R)-hydroxypentanoyl-[ACP] + NADP(+). It carries out the reaction 3-oxohexanoyl-[ACP] + NADPH + H(+) = (3R)-hydroxyhexanoyl-[ACP] + NADP(+). The enzyme catalyses 3-oxoheptanoyl-[ACP] + NADPH + H(+) = (3R)-hydroxyheptanoyl-[ACP] + NADP(+). It catalyses the reaction 3-oxooctanoyl-[ACP] + NADPH + H(+) = (3R)-hydroxyoctanoyl-[ACP] + NADP(+). The catalysed reaction is 3-oxononanoyl-[ACP] + NADPH + H(+) = (3R)-hydroxynonanoyl-[ACP] + NADP(+). It carries out the reaction 3-oxodecanoyl-[ACP] + NADPH + H(+) = (3R)-hydroxydecanoyl-[ACP] + NADP(+). The enzyme catalyses 3-oxohexadecanoyl-[ACP] + NADPH + H(+) = (3R)-hydroxyhexadecanoyl-[ACP] + NADP(+). It catalyses the reaction 3-oxo-(9Z)-hexadecenoyl-[ACP] + NADPH + H(+) = (3R)-hydroxy-(9Z)-hexadecenoyl-[ACP] + NADP(+). The catalysed reaction is 4-methyl-3-oxopentanoyl-[ACP] + NADPH + H(+) = (3R)-hydroxy-4-methylpentanoyl-[ACP] + NADP(+). It carries out the reaction 5-methyl-3-oxohexanoyl-[ACP] + NADPH + H(+) = (3R)-hydroxy-5-methylhexanoyl-[ACP] + NADP(+). The enzyme catalyses 4-methyl-3-oxohexanoyl-[ACP] + NADPH + H(+) = (3R)-hydroxy-4-methylhexanoyl-[ACP] + NADP(+). The protein operates within lipid metabolism; fatty acid biosynthesis. Inhibited by cinnamic acid derivatives. Its function is as follows. Catalyzes the NADPH-dependent reduction of beta-ketoacyl-ACP substrates to beta-hydroxyacyl-ACP products, the first reductive step in the elongation cycle of fatty acid biosynthesis. This chain is 3-oxoacyl-[acyl-carrier-protein] reductase FabG (fabG), found in Escherichia coli (strain K12).